A 759-amino-acid polypeptide reads, in one-letter code: Glycerol-3-phosphate O-acyltransferase 1 (759 aa).

Residues Met1–Lys48 lie on the Lumenal side of the membrane. A helical transmembrane segment spans residues Ile49–Ile69. At Arg70–Gly434 the chain is on the cytoplasmic side. The HXXXXD motif signature appears at His414–Asp419. The helical transmembrane segment at Leu435–Leu449 threads the bilayer. A topological domain (lumenal) is located at residue Ala450. The helical transmembrane segment at Met451–Lys465 threads the bilayer. The Cytoplasmic segment spans residues Arg466–Lys493. The helical transmembrane segment at Ile494–Tyr514 threads the bilayer. Topologically, residues Tyr515–Lys523 are lumenal. A helical transmembrane segment spans residues Ile524–Val544. Over Gly545–Ala759 the chain is Cytoplasmic. 3 disordered regions span residues Glu613 to Asn667, Arg684 to Val705, and Ile729 to Ala759. A compositionally biased stretch (basic and acidic residues) spans Arg647 to Asp659. Over residues Ser688–Glu702 the composition is skewed to low complexity. A compositionally biased stretch (acidic residues) spans Glu736–Ala759.

It belongs to the GPAT/DAPAT family.

It localises to the endoplasmic reticulum membrane. It carries out the reaction sn-glycerol 3-phosphate + an acyl-CoA = a 1-acyl-sn-glycero-3-phosphate + CoA. The enzyme catalyses dihydroxyacetone phosphate + an acyl-CoA = a 1-acylglycerone 3-phosphate + CoA. It catalyses the reaction sn-glycerol 3-phosphate + hexadecanoyl-CoA = 1-hexadecanoyl-sn-glycero-3-phosphate + CoA. The catalysed reaction is (9Z)-hexadecenoyl-CoA + sn-glycerol 3-phosphate = 1-(9Z-hexadecenoyl)-sn-glycero-3-phosphate + CoA. It carries out the reaction sn-glycerol 3-phosphate + octadecanoyl-CoA = 1-octadecanoyl-sn-glycero-3-phosphate + CoA. The enzyme catalyses sn-glycerol 3-phosphate + (9Z)-octadecenoyl-CoA = 1-(9Z-octadecenoyl)-sn-glycero-3-phosphate + CoA. It functions in the pathway phospholipid metabolism; CDP-diacylglycerol biosynthesis; CDP-diacylglycerol from sn-glycerol 3-phosphate: step 1/3. Functionally, dual substrate-specific glycerol-3-phosphate/dihydroxyacetone phosphate sn-1 acyltransferase, catalyzing the first and committed reaction in the de novo synthesis of glycerophospholipids and triacylglycerols (TAGs). Prefers Gly-3-P over dihydroxyacetone phosphate and has a marked preference for 16-carbon fatty acyl chains. Transfers a fatty acid from fatty acyl-CoA to the sn-1 position of glycerol-3-phosphate to produce lysophosphatidic acid (LysoPA). These lipids not only are precursors of glycerolipids, but also are dynamic components of signal transduction systems that control cell physiology. SCT1 is the primary supplier of diacylglycerols (DAG), used mainly in TAG synthesis and phosphatidylcholine (PC) synthesis through the CDP-choline pathway. Regulates fatty acid desaturation, that is, the ratio of unsaturated versus saturated fatty acyl chains, by competing with the desaturase OLE1 for the common substrate C16:0-CoA. Sequesters C16:0-CoA into lipids, thereby shielding it from desaturation by OLE1. In Saccharomyces cerevisiae (strain ATCC 204508 / S288c) (Baker's yeast), this protein is Glycerol-3-phosphate O-acyltransferase 1.